The primary structure comprises 338 residues: Ketol-acid reductoisomerase (NADP(+)) (338 aa).

The KARI N-terminal Rossmann domain occupies 1-181; sequence MKVYYDSDAD…GGGRAGIIET (181 aa). NADP(+) is bound by residues 24–27, arginine 47, serine 50, serine 52, and 82–85; these read YGSQ and DEHQ. The active site involves histidine 107. Position 133 (glycine 133) interacts with NADP(+). Positions 182–327 constitute a KARI C-terminal knotted domain; that stretch reads SFKEETETDL…AKLRAMMPWI (146 aa). Residues aspartate 190, glutamate 194, glutamate 226, and glutamate 230 each contribute to the Mg(2+) site. Serine 251 contacts substrate.

It belongs to the ketol-acid reductoisomerase family. Mg(2+) is required as a cofactor.

The enzyme catalyses (2R)-2,3-dihydroxy-3-methylbutanoate + NADP(+) = (2S)-2-acetolactate + NADPH + H(+). It carries out the reaction (2R,3R)-2,3-dihydroxy-3-methylpentanoate + NADP(+) = (S)-2-ethyl-2-hydroxy-3-oxobutanoate + NADPH + H(+). It participates in amino-acid biosynthesis; L-isoleucine biosynthesis; L-isoleucine from 2-oxobutanoate: step 2/4. It functions in the pathway amino-acid biosynthesis; L-valine biosynthesis; L-valine from pyruvate: step 2/4. Involved in the biosynthesis of branched-chain amino acids (BCAA). Catalyzes an alkyl-migration followed by a ketol-acid reduction of (S)-2-acetolactate (S2AL) to yield (R)-2,3-dihydroxy-isovalerate. In the isomerase reaction, S2AL is rearranged via a Mg-dependent methyl migration to produce 3-hydroxy-3-methyl-2-ketobutyrate (HMKB). In the reductase reaction, this 2-ketoacid undergoes a metal-dependent reduction by NADPH to yield (R)-2,3-dihydroxy-isovalerate. In Magnetococcus marinus (strain ATCC BAA-1437 / JCM 17883 / MC-1), this protein is Ketol-acid reductoisomerase (NADP(+)).